Reading from the N-terminus, the 273-residue chain is tRNA (guanine-N(7)-)-methyltransferase (273 aa).

A compositionally biased stretch (polar residues) spans 1-31 (MSQHPDINTNVDATSLTDDQKSLDTNATSGN). The interval 1-36 (MSQHPDINTNVDATSLTDDQKSLDTNATSGNEVAPD) is disordered. Residues Glu-105, Glu-130, Asp-157, and Asp-179 each coordinate S-adenosyl-L-methionine. Asp-179 is an active-site residue. Substrate contacts are provided by residues Lys-183, Asp-215, and 252–255 (TKFE).

It belongs to the class I-like SAM-binding methyltransferase superfamily. TrmB family.

It carries out the reaction guanosine(46) in tRNA + S-adenosyl-L-methionine = N(7)-methylguanosine(46) in tRNA + S-adenosyl-L-homocysteine. Its pathway is tRNA modification; N(7)-methylguanine-tRNA biosynthesis. In terms of biological role, catalyzes the formation of N(7)-methylguanine at position 46 (m7G46) in tRNA. The chain is tRNA (guanine-N(7)-)-methyltransferase from Psychrobacter cryohalolentis (strain ATCC BAA-1226 / DSM 17306 / VKM B-2378 / K5).